The following is a 161-amino-acid chain: Allophycocyanin beta chain (161 aa).

Asn71 carries the N4-methylasparagine modification. Cys81 is a (2R,3E)-phycocyanobilin binding site.

This sequence belongs to the phycobiliprotein family. In terms of assembly, heterodimer of an alpha and a beta chain. Contains one covalently linked phycocyanobilin chromophore.

It is found in the cellular thylakoid membrane. Its function is as follows. Light-harvesting photosynthetic bile pigment-protein from the phycobiliprotein complex. Allophycocyanin has a maximum absorption at approximately 650 nanometers. This is Allophycocyanin beta chain (apcB) from Arthrospira platensis (Spirulina platensis).